The following is a 142-amino-acid chain: Protein E6 (142 aa).

Zinc fingers lie at residues 30–66 (CVFCRFYLTEQQLAAFYIKNLKLVWKNRYCFACCTPC) and 103–139 (CFDCLTLLSFAEKIDCIISGQNFYLVRGRWRSYCRNC).

It belongs to the papillomaviridae E6 protein family. In terms of assembly, forms homodimers. Interacts with ubiquitin-protein ligase UBE3A/E6-AP; this interaction stimulates UBE3A ubiquitin activity. Interacts with host BAK1.

The protein resides in the host cytoplasm. It localises to the host nucleus. Functionally, plays a major role in the induction and maintenance of cellular transformation. E6 associates with host UBE3A/E6-AP ubiquitin-protein ligase and modulates its activity. Protects host keratinocytes from apoptosis by mediating the degradation of host BAK1. May also inhibit host immune response. The sequence is that of Protein E6 from Homo sapiens (Human).